A 571-amino-acid chain; its full sequence is Urease subunit alpha (571 aa).

In terms of domain architecture, Urease spans 133 to 571; the sequence is GGIDTHVHFI…LPLTQRYFLF (439 aa). Residues H138, H140, and K221 each contribute to the Ni(2+) site. K221 carries the post-translational modification N6-carboxylysine. A substrate-binding site is contributed by H223. Residues H250 and H276 each coordinate Ni(2+). H324 functions as the Proton donor in the catalytic mechanism. Position 364 (D364) interacts with Ni(2+).

It belongs to the metallo-dependent hydrolases superfamily. Urease alpha subunit family. In terms of assembly, heterotrimer of UreA (gamma), UreB (beta) and UreC (alpha) subunits. Three heterotrimers associate to form the active enzyme. The cofactor is Ni cation. Post-translationally, carboxylation allows a single lysine to coordinate two nickel ions.

The protein resides in the cytoplasm. It carries out the reaction urea + 2 H2O + H(+) = hydrogencarbonate + 2 NH4(+). It functions in the pathway nitrogen metabolism; urea degradation; CO(2) and NH(3) from urea (urease route): step 1/1. This is Urease subunit alpha from Staphylococcus aureus (strain bovine RF122 / ET3-1).